Here is a 258-residue protein sequence, read N- to C-terminus: MSKVKLTRENIISLLTQAGEIEFEEDQIKATFNFEDFCGENLDSIKKMSITSCLTFLKNRQSIMKVVNLCDFTFGKITIKKNSGRVGANDMTFRRLDSMIRVKLIEETGKAENLAIIKSKIASHPLVQAYGLPLTDAKSVRLAIMLGGSIPLIASVDSFEMISIILAIYQDAKYKDLGIEPSKYNTKEALGKVCTVLKSKGFTMDEEQVQKGKEYATILSSCNPNAKGSIAMEHYSEHLDKFYAMFGVRKEAKISGVA.

The protein belongs to the tospovirus nucleocapsid protein family. As to quaternary structure, homotrimer. Binds the viral genomic RNA.

Its subcellular location is the virion. Encapsidates the genome protecting it from nucleases. The encapsidated genomic RNA is termed the nucleocapsid (NC) and serves as template for transcription and replication. The NC have a helical organization. The sequence is that of Nucleoprotein (N) from Frankliniella occidentalis (Western flower thrips).